A 459-amino-acid polypeptide reads, in one-letter code: Probable Delta(5) fatty acid desaturase C (459 aa).

One can recognise a Cytochrome b5 heme-binding domain in the interval 9 to 87 (KKLYSWKEIS…LKQYEIGQVS (79 aa)). 2 residues coordinate heme: H45 and H68. 2 helical membrane passes run 121–141 (FAFG…TSYY) and 151–171 (FYLN…FSLH). Positions 174–178 (HDACH) match the Histidine box-1 motif. The helical transmembrane segment at 187–207 (VWKWLGATYDLFIGASFFYWC) threads the bilayer. A Histidine box-2 motif is present at residues 210 to 215 (HVIGHH). 2 helical membrane passes run 289 to 309 (FEII…FIIP) and 315 to 335 (LVNL…YLSF). The Histidine box-3 motif lies at 394–398 (QVVHH).

Belongs to the fatty acid desaturase type 1 family. Fe cation serves as cofactor.

Its subcellular location is the membrane. This is Probable Delta(5) fatty acid desaturase C from Dictyostelium discoideum (Social amoeba).